The sequence spans 245 residues: Enolase-phosphatase E1 (245 aa).

Residues Asp14 and Glu16 each contribute to the Mg(2+) site. Substrate is bound by residues 141–142 (SS) and Lys175. Position 200 (Asp200) interacts with Mg(2+).

This sequence belongs to the HAD-like hydrolase superfamily. MasA/MtnC family. In terms of assembly, monomer. Mg(2+) serves as cofactor.

Its subcellular location is the cytoplasm. The protein localises to the nucleus. It catalyses the reaction 5-methylsulfanyl-2,3-dioxopentyl phosphate + H2O = 1,2-dihydroxy-5-(methylsulfanyl)pent-1-en-3-one + phosphate. It functions in the pathway amino-acid biosynthesis; L-methionine biosynthesis via salvage pathway; L-methionine from S-methyl-5-thio-alpha-D-ribose 1-phosphate: step 3/6. It participates in amino-acid biosynthesis; L-methionine biosynthesis via salvage pathway; L-methionine from S-methyl-5-thio-alpha-D-ribose 1-phosphate: step 4/6. Its function is as follows. Bifunctional enzyme that catalyzes the enolization of 2,3-diketo-5-methylthiopentyl-1-phosphate (DK-MTP-1-P) into the intermediate 2-hydroxy-3-keto-5-methylthiopentenyl-1-phosphate (HK-MTPenyl-1-P), which is then dephosphorylated to form the acireductone 1,2-dihydroxy-3-keto-5-methylthiopentene (DHK-MTPene). In Drosophila grimshawi (Hawaiian fruit fly), this protein is Enolase-phosphatase E1.